The chain runs to 402 residues: Propionate kinase (402 aa).

Residues N11 and K18 each coordinate ATP. N11 contacts Mg(2+). Residue R86 participates in substrate binding. D143 serves as the catalytic Proton donor/acceptor. Residues H175, 203–207 (HLGNG), 278–280 (DLR), and 326–330 (GIGEN) each bind ATP.

The protein belongs to the acetokinase family. TdcD subfamily. Homodimer. Requires Mg(2+) as cofactor.

The catalysed reaction is propanoate + ATP = propanoyl phosphate + ADP. It participates in amino-acid degradation; L-threonine degradation via propanoate pathway; propanoate from L-threonine: step 4/4. Its function is as follows. Catalyzes the conversion of propionyl phosphate and ADP to propionate and ATP. This is Propionate kinase from Escherichia coli O157:H7.